We begin with the raw amino-acid sequence, 627 residues long: DNA mismatch repair protein MutL (627 aa).

Residues 354–364 show a composition bias toward basic and acidic residues; that stretch reads DEKPPEKKVPE. The disordered stretch occupies residues 354–374; the sequence is DEKPPEKKVPEKSTAPSYSPM.

It belongs to the DNA mismatch repair MutL/HexB family.

Its function is as follows. This protein is involved in the repair of mismatches in DNA. It is required for dam-dependent methyl-directed DNA mismatch repair. May act as a 'molecular matchmaker', a protein that promotes the formation of a stable complex between two or more DNA-binding proteins in an ATP-dependent manner without itself being part of a final effector complex. Overexpression of mutSL partially suppresses the high spontaneous mutation frequency of a ytkD/mutM/mutY triple disruption which lacks the system required to prevent damage by oxidized guanine (8-oxo-dGTP). This suggests that MutSL also functions to repair mismatches due to oxidative stress in both growing and stationary phase cells. This chain is DNA mismatch repair protein MutL, found in Bacillus subtilis (strain 168).